The sequence spans 81 residues: Putative membrane protein insertion efficiency factor (81 aa).

Residues 61–81 form a disordered region; it reads NDGGYDPVPPAPSSRTSSIAE.

It belongs to the UPF0161 family.

Its subcellular location is the cell inner membrane. Its function is as follows. Could be involved in insertion of integral membrane proteins into the membrane. The protein is Putative membrane protein insertion efficiency factor of Pseudomonas putida (strain ATCC 47054 / DSM 6125 / CFBP 8728 / NCIMB 11950 / KT2440).